The sequence spans 501 residues: Growth/differentiation factor 5 (501 aa).

The first 27 residues, 1-27, serve as a signal peptide directing secretion; it reads MRLPKLLTFLLWYLAWLDLEFICTVLG. A propeptide spanning residues 28–381 is cleaved from the precursor; sequence APDLGQRPQG…YLFSQRRKRR (354 aa). The tract at residues 29 to 169 is disordered; that stretch reads PDLGQRPQGT…EPFRPPPITP (141 aa). Over residues 99–111 the composition is skewed to pro residues; the sequence is PRPGGPEPKPGHP. The segment covering 148 to 162 has biased composition (basic and acidic residues); the sequence is KAREPGPPREPKEPF. An N-linked (GlcNAc...) asparagine glycan is attached at asparagine 189. The tract at residues 246–265 is disordered; it reads PSDTAKPAAPGGGRAAQLKL. 3 disulfides stabilise this stretch: cysteine 400-cysteine 466, cysteine 429-cysteine 498, and cysteine 433-cysteine 500.

It belongs to the TGF-beta family. As to quaternary structure, homodimer; disulfide-linked. Interacts with serine proteases, HTRA1 and HTRA3. Following LPS binding, may form a complex with CXCR4, HSP90AA1 and HSPA8. Interacts with high affinity with NOG; inhibits chondrogenesis. Interacts with high affinity with BMPR1B and lower affinity with BMPR1A; positively regulates chondrocyte differentiation and induces SMAD dependent signaling. Interacts with FBN1 (via N-terminal domain) and FBN2. Interacts with TGFBR3. As to expression, predominantly expressed in long bones during embryonic development. Expressed in monocytes (at protein level).

The protein localises to the secreted. Its subcellular location is the cell membrane. Growth factor involved in bone and cartilage formation. During cartilage development regulates differentiation of chondrogenic tissue through two pathways. Firstly, positively regulates differentiation of chondrogenic tissue through its binding of high affinity with BMPR1B and of less affinity with BMPR1A, leading to induction of SMAD1-SMAD5-SMAD8 complex phosphorylation and then SMAD protein signaling transduction. Secondly, negatively regulates chondrogenic differentiation through its interaction with NOG. Required to prevent excessive muscle loss upon denervation. This function requires SMAD4 and is mediated by phosphorylated SMAD1/5/8. Binds bacterial lipopolysaccharide (LPS) and mediates LPS-induced inflammatory response, including TNF secretion by monocytes. This is Growth/differentiation factor 5 (GDF5) from Homo sapiens (Human).